The sequence spans 216 residues: MKIIEFRKKIPYLRYLEMQEKLRKFRKECILFLEHAPTITGGINYNPENLLVKPEFLESMGIQIHWTQRGGDFTAHEPGQLVLYSHVDLKKRNLSIRFYLENLLRSVIDSVRSTWDLQLISDSDSPGLYLESNPSQKICSIGVNFKSFFTSHGIAFNLSNDLKTFRCINPCGRNWTNMTSVKDLGLDFGLHKRDELISCLKKNLCSFLEPINVSSS.

Residues 24 to 212 (KFRKECILFL…NLCSFLEPIN (189 aa)) form the BPL/LPL catalytic domain. Residues 69–76 (RGGDFTAH), 140–142 (SIG), and 153–155 (GIA) each bind substrate. Residue Cys-171 is the Acyl-thioester intermediate of the active site.

This sequence belongs to the LipB family.

The protein resides in the cytoplasm. The enzyme catalyses octanoyl-[ACP] + L-lysyl-[protein] = N(6)-octanoyl-L-lysyl-[protein] + holo-[ACP] + H(+). It functions in the pathway protein modification; protein lipoylation via endogenous pathway; protein N(6)-(lipoyl)lysine from octanoyl-[acyl-carrier-protein]: step 1/2. Catalyzes the transfer of endogenously produced octanoic acid from octanoyl-acyl-carrier-protein onto the lipoyl domains of lipoate-dependent enzymes. Lipoyl-ACP can also act as a substrate although octanoyl-ACP is likely to be the physiological substrate. This chain is Octanoyltransferase, found in Leptospira interrogans serogroup Icterohaemorrhagiae serovar copenhageni (strain Fiocruz L1-130).